The following is a 122-amino-acid chain: Large ribosomal subunit protein uL29A (122 aa).

Residues 10 to 69 (QLGIKQIEERAAEIKADLAALRQKKNSGDVGANDIKTAKKNLARALTVRREKILEELVEA) are a coiled coil.

This sequence belongs to the universal ribosomal protein uL29 family. Component of the large ribosomal subunit.

The protein resides in the cytoplasm. In Encephalitozoon cuniculi (strain GB-M1) (Microsporidian parasite), this protein is Large ribosomal subunit protein uL29A (RPL35A).